Consider the following 74-residue polypeptide: Antimicrobial peptide ToAp1 (74 aa).

The signal sequence occupies residues 1-22 (MQMKYLIPIFFLVLIVADHCHA). Position 39 is a lysine amide (lysine 39). Residues 40 to 74 (GRRKRDITAQIEQYRNIQKREAAELEELLANLPVY) constitute a propeptide that is removed on maturation.

This sequence belongs to the non-disulfide-bridged peptide (NDBP) superfamily. Short antimicrobial peptide (group 4) family. As to expression, expressed by the venom gland.

The protein localises to the secreted. In terms of biological role, antimicrobial peptide. Is able to kill Mycobacterium abscessus subsp. massiliense in a dose-dependent manner. Has antifungal activity against Candida spp. and one Cryptococcus neoformans strains with MICs values ranging from 12.5 to 200 uM. Also shows an inhibitory activity on C.albicans biofilms at high concentrations. Shows low cytotoxic activity and has weak hemolytic activity on human erythrocytes. Shows anti-inflammatory activities, since it decreases release of pro-inflammatory cytokines, and increases release of anti-inflammatory cytokines. Acts by blocking the Toll-like receptor 4 (TLR4). In addition, decreases the expression of costimulatory molecules such as CD80 and CD86 in LPS-stimulated cells. In vivo, does not induce immune cell migration. Helical wheel projections predict an amphipathic peptide with distinct hydrophobic and hydrophilic faces. The polypeptide is Antimicrobial peptide ToAp1 (Tityus obscurus (Amazonian scorpion)).